The following is a 511-amino-acid chain: Probable mannosyl-oligosaccharide alpha-1,2-mannosidase 1B (511 aa).

Positions 1–18 (MHLPSLSLAWALAGSSLA) are cleaved as a signal peptide. N-linked (GlcNAc...) asparagine glycosylation is found at N90 and N177. C327 and C356 form a disulfide bridge. E370 functions as the Proton donor in the catalytic mechanism. N-linked (GlcNAc...) asparagine glycosylation is present at N433. A Ca(2+)-binding site is contributed by T501.

This sequence belongs to the glycosyl hydrolase 47 family. In terms of assembly, monomer. The cofactor is Ca(2+). Mg(2+) serves as cofactor.

It is found in the cytoplasmic vesicle lumen. It carries out the reaction N(4)-(alpha-D-Man-(1-&gt;2)-alpha-D-Man-(1-&gt;2)-alpha-D-Man-(1-&gt;3)-[alpha-D-Man-(1-&gt;2)-alpha-D-Man-(1-&gt;3)-[alpha-D-Man-(1-&gt;2)-alpha-D-Man-(1-&gt;6)]-alpha-D-Man-(1-&gt;6)]-beta-D-Man-(1-&gt;4)-beta-D-GlcNAc-(1-&gt;4)-beta-D-GlcNAc)-L-asparaginyl-[protein] (N-glucan mannose isomer 9A1,2,3B1,2,3) + 4 H2O = N(4)-(alpha-D-Man-(1-&gt;3)-[alpha-D-Man-(1-&gt;3)-[alpha-D-Man-(1-&gt;6)]-alpha-D-Man-(1-&gt;6)]-beta-D-Man-(1-&gt;4)-beta-D-GlcNAc-(1-&gt;4)-beta-D-GlcNAc)-L-asparaginyl-[protein] (N-glucan mannose isomer 5A1,2) + 4 beta-D-mannose. The enzyme catalyses N(4)-(alpha-D-Man-(1-&gt;2)-alpha-D-Man-(1-&gt;2)-alpha-D-Man-(1-&gt;3)-[alpha-D-Man-(1-&gt;3)-[alpha-D-Man-(1-&gt;2)-alpha-D-Man-(1-&gt;6)]-alpha-D-Man-(1-&gt;6)]-beta-D-Man-(1-&gt;4)-beta-D-GlcNAc-(1-&gt;4)-beta-D-GlcNAc)-L-asparaginyl-[protein] (N-glucan mannose isomer 8A1,2,3B1,3) + 3 H2O = N(4)-(alpha-D-Man-(1-&gt;3)-[alpha-D-Man-(1-&gt;3)-[alpha-D-Man-(1-&gt;6)]-alpha-D-Man-(1-&gt;6)]-beta-D-Man-(1-&gt;4)-beta-D-GlcNAc-(1-&gt;4)-beta-D-GlcNAc)-L-asparaginyl-[protein] (N-glucan mannose isomer 5A1,2) + 3 beta-D-mannose. Its pathway is protein modification; protein glycosylation. Its function is as follows. Involved in the maturation of Asn-linked oligosaccharides. Progressively trims alpha-1,2-linked mannose residues from Man(9)GlcNAc(2) to produce Man(5)GlcNAc(2). This chain is Probable mannosyl-oligosaccharide alpha-1,2-mannosidase 1B (mns1B), found in Aspergillus clavatus (strain ATCC 1007 / CBS 513.65 / DSM 816 / NCTC 3887 / NRRL 1 / QM 1276 / 107).